An 88-amino-acid polypeptide reads, in one-letter code: U18-hexatoxin-Hi1a (88 aa).

An N-terminal signal peptide occupies residues 1–17 (MRIYSLLILSFLLLASA). The propeptide occupies 18-47 (VLINSAEMPRSEKSLLYSIMQGREDSEEGR). 4 disulfide bridges follow: Cys-48–Cys-63, Cys-55–Cys-69, Cys-62–Cys-81, and Cys-71–Cys-79.

Belongs to the neurotoxin 07 (Beta/delta-agtx) family. 02 (aga-3) subfamily. Expressed by the venom gland.

It is found in the secreted. Weak insecticidal toxin with probable ion channel impairing activity. In vivo, induces paralysis when injected into sheep blowflies (L.cuprina). Shows weak toxicity, since it is only toxic at high doses, and flies recover within 24 hours. The polypeptide is U18-hexatoxin-Hi1a (Hadronyche infensa (Fraser island funnel-web spider)).